An 858-amino-acid polypeptide reads, in one-letter code: Potassium transporter 7 (858 aa).

2 stretches are compositionally biased toward acidic residues: residues 1-16 (MAEE…EEID) and 38-53 (QDDD…DNDG). The segment at 1–68 (MAEESSMEGS…LESDEDEIPE (68 aa)) is disordered. At 1 to 104 (MAEESSMEGS…DYEDLTVGRK (104 aa)) the chain is on the cytoplasmic side. The chain crosses the membrane as a helical span at residues 105–125 (VLLAFQTLGVVFGDVGTSPLY). Residues 126–147 (TFSVMFSKSPVQEKEDVIGALS) are Extracellular-facing. A helical transmembrane segment spans residues 148 to 168 (LVLYTLLLVPLIKYVLVVLWA). Over 169-232 (NDDGEGGTFA…KLENSLILKK (64 aa)) the chain is Cytoplasmic. A helical membrane pass occupies residues 233–253 (ILLVLVLAGTSMVIADGVVTP). The Extracellular portion of the chain corresponds to 254 to 269 (AMSVMSAVGGLKVGVD). A helical membrane pass occupies residues 270–290 (VVEQDQVVMISVAFLVILFSL). Over 291–297 (QKYGTSK) the chain is Cytoplasmic. A helical membrane pass occupies residues 298 to 318 (MGLVVGPALLIWFCSLAGIGI). Topologically, residues 319 to 345 (YNLIKYDSSVYRAFNPVHIYYFFKRNS) are extracellular. A helical transmembrane segment spans residues 346 to 366 (INAWYALGGCILCATGSEALF). At 367-380 (ADLCYFSVRSVQLT) the chain is on the cytoplasmic side. A helical membrane pass occupies residues 381–401 (FVCLVLPCLMLGYMGQAAYLM). Topologically, residues 402-413 (ENHADASQAFFS) are extracellular. The chain crosses the membrane as a helical span at residues 414 to 434 (SVPGSAFWPVLFIANIAALIA). Over 435-470 (SRTMTTATFSCIKQSTALGCFPRLKIIHTSRKFMGQ) the chain is Cytoplasmic. Residues 471 to 491 (IYIPVLNWFLLAVCLVVVCSI) form a helical membrane-spanning segment. Residues 492–496 (SSIDE) are Extracellular-facing. Residues 497-517 (IGNAYGMAELGVMMTTTILVT) form a helical membrane-spanning segment. Residue Leu518 is a topological domain, cytoplasmic. Residues 519–539 (IMLLIWQINIVIVIAFLVVFL) traverse the membrane as a helical segment. At 540–552 (GVELVFFSSVIAS) the chain is on the extracellular side. A helical transmembrane segment spans residues 553–573 (VGDGSWIILVFAVIMFGIMYI). The Cytoplasmic portion of the chain corresponds to 574-858 (WNYGSKLRYE…LMQVGMTYMV (285 aa)). The disordered stretch occupies residues 707–731 (QERSLESDGNDDSDSEEDFPGSRVV). Acidic residues predominate over residues 714–725 (DGNDDSDSEEDF). Phosphoserine is present on residues Ser719 and Ser721.

This sequence belongs to the HAK/KUP transporter (TC 2.A.72.3) family.

It is found in the cell membrane. Functionally, probable potassium transporter. In Arabidopsis thaliana (Mouse-ear cress), this protein is Potassium transporter 7 (POT7).